Reading from the N-terminus, the 510-residue chain is DNA-directed RNA polymerase I subunit RPA34 (510 aa).

Met-1 is subject to N-acetylmethionine. The interval 1–31 is disordered; it reads MEEPQAGDAARFSCPPNFTAKPPASESPRFS. Phosphoserine is present on Ser-27. Position 80 is a phosphotyrosine (Tyr-80). The disordered stretch occupies residues 120 to 143; sequence GPQQSLSGSPLQPIPASPPPQIPP. A phosphoserine mark is found at Ser-128, Ser-136, Ser-172, and Ser-205. A compositionally biased stretch (pro residues) spans 131–143; it reads QPIPASPPPQIPP. Residues 203–510 form a disordered region; that stretch reads LGSPEMDVRK…KRKQQQQQPV (308 aa). Residues 258 to 270 are compositionally biased toward basic and acidic residues; sequence GKETFEPEDKTVK. Lys-270 participates in a covalent cross-link: Glycyl lysine isopeptide (Lys-Gly) (interchain with G-Cter in SUMO1); alternate. Lys-270 is covalently cross-linked (Glycyl lysine isopeptide (Lys-Gly) (interchain with G-Cter in SUMO2); alternate). The residue at position 285 (Ser-285) is a Phosphoserine. The residue at position 287 (Thr-287) is a Phosphothreonine. The residue at position 309 (Ser-309) is a Phosphoserine. Lys-314 is covalently cross-linked (Glycyl lysine isopeptide (Lys-Gly) (interchain with G-Cter in SUMO1); alternate). A Glycyl lysine isopeptide (Lys-Gly) (interchain with G-Cter in SUMO2); alternate cross-link involves residue Lys-314. Low complexity-rich tracts occupy residues 372–382 and 394–407; these read AKPQAQAALAA and DATV…VGPE. The segment covering 421–430 has biased composition (basic residues); that stretch reads TKKKKKKKER. Residues 436 to 452 show a composition bias toward low complexity; the sequence is EPIQPLEPELPGEGQPE. Residue Ser-490 is modified to Phosphoserine.

The protein belongs to the eukaryotic RPA34 RNA polymerase subunit family. In terms of assembly, component of the RNA polymerase I (Pol I) complex consisting of 13 subunits: a ten-subunit catalytic core composed of POLR1A/RPA1, POLR1B/RPA2, POLR1C/RPAC1, POLR1D/RPAC2, POLR1H/RPA12, POLR2E/RPABC1, POLR2F/RPABC2, POLR2H/RPABC3, POLR2K/RPABC4 and POLR2L/RPABC5; a mobile stalk subunit POLR1F/RPA43 protruding from the core and additional subunits homologous to general transcription factors POLR1E/RPA49 and POLR1G/RPA34. Forms a heterodimer with POLR1E/RPA49. Part of Pol I pre-initiation complex (PIC), in which Pol I core assembles with RRN3 and promoter-bound UTBF and SL1/TIF-IB complex. Interacts with TAF1A thereby associates with the SL1/TIF-IB complex. Interacts with UBTF. Interacts with POLR1E/PRAF1 through its N-terminal region. Interacts with CD3E. Undergoes tyrosine phosphorylation upon T-cell receptor (TCR) stimulation. This phosphorylation has not been confirmed by other groups. In terms of processing, phosphorylated on tyrosine residues in initiation-competent Pol I-beta complexes but not in Pol I-alpha complexes.

Its subcellular location is the nucleus. The protein localises to the nucleolus. The protein resides in the chromosome. Functionally, component of RNA polymerase I (Pol I), a DNA-dependent RNA polymerase which synthesizes ribosomal RNA precursors using the four ribonucleoside triphosphates as substrates. Involved in UBTF-activated transcription, presumably at a step following PIC formation. Its function is as follows. Has been described as a component of preformed T-cell receptor (TCR) complex. The polypeptide is DNA-directed RNA polymerase I subunit RPA34 (Homo sapiens (Human)).